A 137-amino-acid chain; its full sequence is ATP synthase epsilon chain (137 aa).

The protein belongs to the ATPase epsilon chain family. As to quaternary structure, F-type ATPases have 2 components, CF(1) - the catalytic core - and CF(0) - the membrane proton channel. CF(1) has five subunits: alpha(3), beta(3), gamma(1), delta(1), epsilon(1). CF(0) has three main subunits: a, b and c.

It is found in the cellular thylakoid membrane. Its function is as follows. Produces ATP from ADP in the presence of a proton gradient across the membrane. The chain is ATP synthase epsilon chain from Nostoc punctiforme (strain ATCC 29133 / PCC 73102).